The chain runs to 476 residues: UDP-glucose 6-dehydrogenase (476 aa).

Residues 7 to 12 (GAGYVG), D32, R37, 85 to 89 (VNTPT), 126 to 127 (ST), and E161 contribute to the NAD(+) site. Substrate is bound by residues 157-161 (EFLAE), 216-220 (KLAAN), R256, and 263-269 (QASVGFG). C272 serves as the catalytic Nucleophile. NAD(+) is bound at residue 272–275 (CFQK). Residue 334-335 (FK) coordinates substrate. Residue R342 coordinates NAD(+). Residue R439 participates in substrate binding.

The protein belongs to the UDP-glucose/GDP-mannose dehydrogenase family.

The catalysed reaction is UDP-alpha-D-glucose + 2 NAD(+) + H2O = UDP-alpha-D-glucuronate + 2 NADH + 3 H(+). The protein operates within nucleotide-sugar biosynthesis; UDP-alpha-D-glucuronate biosynthesis; UDP-alpha-D-glucuronate from UDP-alpha-D-glucose: step 1/1. Involved in the biosynthesis of glycosaminoglycans; hyaluronan, chondroitin sulfate and heparan sulfate. Required for wingless signaling in different tissues. The chain is UDP-glucose 6-dehydrogenase (sgl) from Drosophila melanogaster (Fruit fly).